Reading from the N-terminus, the 679-residue chain is MSQYTDIDRLAVSTIRLLAVDQVSAANSGHPGAPLGLAPAAHVIWKQMRLNPKNPEWINRDRFVLSNGHACALLYSLLHLFGYDMSIEDLKHFRHLGSKTPGHPEFELPGVEVTTGPLGQGISNAVGMAIAQANFAATYNKPDYELSDSYTYVFLGDGCLQEGVSSEASSLAGHLRLKNLIAFYDDNQITIDGNINVSFDEDVSKRYEAYGWEVLHVENGNDDLDAISKALEQAKLSDRPTLIKLTTTIGFGSLNAGSHSVHGAPLKADDVKQLKVKFGFNPEESFVVPQEVYDLYNKSTIEPGIEANKQWDALLDAYVGQFPELGAEVKRRLAGEFPEGWESKLPTYTPEDSAVASRKLSEIVLDNVFDTLPELLGGSADLTPSNLTRSKGAVDFQPPITGLGDYSGRYIRYGVREHGMGAIMNGISAFGANYRPYGGTFLNFVSYASGAVRLSALSGHPVIWVATHDSIGLGEDGPTHQPIETLAHFRAIPNLQVWRPADGNEVTAAYKVALTNKHTPAIIALSRQNLPQLQGSSVEKAVKGGYILQDVDQPDLAIVSTGSEVGIAVEAAKVLAEKNIKARIVSLPDFHSFGQQSKEYQLSVFPDGVPILSVEVLATSGWSKYAHQSFGLDRFGASGKGPAVYEKFEFTPQGIATRAEKTVEFYKGKQVISPLNTAF.

His30 contributes to the substrate binding site. Thiamine diphosphate-binding positions include His69 and 116–118; that span reads GPL. Asp157 contributes to the Mg(2+) binding site. Thiamine diphosphate is bound by residues Gly158 and Asn187. Asn187 and Ile189 together coordinate Mg(2+). 3 residues coordinate substrate: His262, Arg358, and Ser385. His262 serves as a coordination point for thiamine diphosphate. Residues Glu417 and Phe444 each coordinate thiamine diphosphate. Glu417 serves as the catalytic Proton donor. Substrate contacts are provided by His468, Asp476, and Arg527.

The protein belongs to the transketolase family. In terms of assembly, homodimer. Requires Mg(2+) as cofactor. Ca(2+) is required as a cofactor. Mn(2+) serves as cofactor. It depends on Co(2+) as a cofactor. The cofactor is thiamine diphosphate.

The catalysed reaction is D-sedoheptulose 7-phosphate + D-glyceraldehyde 3-phosphate = aldehydo-D-ribose 5-phosphate + D-xylulose 5-phosphate. In terms of biological role, catalyzes the transfer of a two-carbon ketol group from a ketose donor to an aldose acceptor, via a covalent intermediate with the cofactor thiamine pyrophosphate. This chain is Transketolase (TKL1), found in Kluyveromyces lactis (strain ATCC 8585 / CBS 2359 / DSM 70799 / NBRC 1267 / NRRL Y-1140 / WM37) (Yeast).